Reading from the N-terminus, the 931-residue chain is Bifunctional uridylyltransferase/uridylyl-removing enzyme (931 aa).

The tract at residues 1–383 (MDLATTNDAA…RPGTELRRVP (383 aa)) is uridylyltransferase. Positions 384–739 (EGDDFIIDNN…VGFDEARGVT (356 aa)) are uridylyl-removing. The region spanning 499–622 (VDEHLLRCIG…VQSVEQMKLL (124 aa)) is the HD domain. ACT domains are found at residues 740-822 (ELTI…VVAR) and 851-931 (VIEV…QSVG).

This sequence belongs to the GlnD family. Mg(2+) serves as cofactor.

It catalyses the reaction [protein-PII]-L-tyrosine + UTP = [protein-PII]-uridylyl-L-tyrosine + diphosphate. The catalysed reaction is [protein-PII]-uridylyl-L-tyrosine + H2O = [protein-PII]-L-tyrosine + UMP + H(+). With respect to regulation, uridylyltransferase (UTase) activity is inhibited by glutamine, while glutamine activates uridylyl-removing (UR) activity. In terms of biological role, modifies, by uridylylation and deuridylylation, the PII regulatory proteins (GlnB and homologs), in response to the nitrogen status of the cell that GlnD senses through the glutamine level. Under low glutamine levels, catalyzes the conversion of the PII proteins and UTP to PII-UMP and PPi, while under higher glutamine levels, GlnD hydrolyzes PII-UMP to PII and UMP (deuridylylation). Thus, controls uridylylation state and activity of the PII proteins, and plays an important role in the regulation of nitrogen assimilation and metabolism. This Nitrobacter hamburgensis (strain DSM 10229 / NCIMB 13809 / X14) protein is Bifunctional uridylyltransferase/uridylyl-removing enzyme.